A 339-amino-acid polypeptide reads, in one-letter code: Ribosomal RNA small subunit methyltransferase H (339 aa).

Residues 56-58 (GGH), Asp76, Phe102, Asp123, and Gln130 each bind S-adenosyl-L-methionine. Disordered regions lie at residues 274 to 309 (RHSR…KAEV) and 320 to 339 (LRVA…PQHS). Residues 325–339 (RTDTPYNTDPSPQHS) show a composition bias toward polar residues.

This sequence belongs to the methyltransferase superfamily. RsmH family.

Its subcellular location is the cytoplasm. The enzyme catalyses cytidine(1402) in 16S rRNA + S-adenosyl-L-methionine = N(4)-methylcytidine(1402) in 16S rRNA + S-adenosyl-L-homocysteine + H(+). Specifically methylates the N4 position of cytidine in position 1402 (C1402) of 16S rRNA. The chain is Ribosomal RNA small subunit methyltransferase H from Psychrobacter sp. (strain PRwf-1).